A 553-amino-acid polypeptide reads, in one-letter code: Cytokine-like nuclear factor N-PAC (553 aa).

A PWWP domain is found at 8–66 (LGDLVWGKLGRYPPWPGKIVNPPKDLKKPRGKKCFFVKFFGTEDHAWIKVEQLKPYHAH). Composition is skewed to basic and acidic residues over residues 92–145 (RAKG…EGKK) and 162–182 (RAQE…KDLS). Positions 92–190 (RAKGKDQTSS…LSIPESSTVK (99 aa)) are disordered. At Ser130 the chain carries Phosphoserine. Residue Lys135 forms a Glycyl lysine isopeptide (Lys-Gly) (interchain with G-Cter in SUMO2) linkage. Phosphoserine is present on Ser167. Residues 168-180 (PRKRGRPPKDEKD) constitute a DNA-binding region (a.T hook). Residues Lys176, Lys179, Lys201, and Lys211 each participate in a glycyl lysine isopeptide (Lys-Gly) (interchain with G-Cter in SUMO2) cross-link. Residues 214–217 (DPHF) are interaction with histone H3. An interaction with KDM1B region spans residues 216 to 225 (HFHHFLLSQT). Glycyl lysine isopeptide (Lys-Gly) (interchain with G-Cter in SUMO2) cross-links involve residues Lys227, Lys237, Lys240, and Lys269. The interval 261 to 553 (GSVTPTDKKI…MSAVYRAYIH (293 aa)) is dehydrogenase domain. 271–285 (GFLGLGLMGSGIVSN) is an NAD(+) binding site. A Glycyl lysine isopeptide (Lys-Gly) (interchain with G-Cter in SUMO2) cross-link involves residue Lys302. 2 residues coordinate NAD(+): Thr362 and Lys505. The residue at position 540 (Ser540) is a Phosphoserine.

This sequence belongs to the HIBADH-related family. NP60 subfamily. As to quaternary structure, homotetramere. Interacts with MAPK14. Interacts with KDM1B at nucleosomes; this interaction stimulates H3K4me1 and H3K4me2 demethylation. Binds to mononucleosomes. Interacts with GATA4; the interaction is required for a synergistic activation of GATA4 target genes transcription.

It is found in the nucleus. The protein localises to the chromosome. Cytokine-like nuclear factor with chromatin gene reader activity involved in chromatin modification and regulation of gene expression. Acts as a nucleosome-destabilizing factor that is recruited to genes during transcriptional activation. Recognizes and binds histone H3 without a preference for specific epigenetic markers and also binds DNA. Interacts with KDM1B and promotes its histone demethylase activity by facilitating the capture of H3 tails, they form a multifunctional enzyme complex that modifies transcribed chromatin and facilitates Pol II transcription through nucleosomes. Stimulates the acetylation of 'Lys-56' of nucleosomal histone H3 (H3K56ac) by EP300. With GATA4, co-binds a defined set of heart development genes and coregulates their expression during cardiomyocyte differentiation. Regulates p38 MAP kinase activity by mediating stress activation of MAPK14/p38alpha and specifically regulating MAPK14 signaling. Indirectly promotes phosphorylation of MAPK14 and activation of ATF2. The phosphorylation of MAPK14 requires upstream activity of MAP2K4 and MAP2K6. The protein is Cytokine-like nuclear factor N-PAC (GLYR1) of Bos taurus (Bovine).